The primary structure comprises 852 residues: GPI ethanolamine phosphate transferase 2 (852 aa).

Asparagine 191 and asparagine 420 each carry an N-linked (GlcNAc...) asparagine glycan. Transmembrane regions (helical) follow at residues 458–478, 486–506, and 516–536; these read LIRLYVGLSISGFAISLTFFP, FAPAGMFLGFSILSYSTMMFA, and FWYWISMGWVVYLHVKYAGHF. The N-linked (GlcNAc...) asparagine glycan is linked to asparagine 576. A run of 6 helical transmembrane segments spans residues 632 to 652, 676 to 696, 714 to 734, 750 to 770, 787 to 807, and 824 to 844; these read LLYHARMVLCGISLLMIYSLY, TLTLFLLMQSKVTNIPAFLVF, TITSLLMQYVTFYAFGGSNAI, SVFIVGALTFISNWAAPIWWV, AHVTILTLHMATILMSVMAAC, and YLYTIAWAMINHIVVNVLGEI.

It belongs to the PIGG/PIGN/PIGO family. PIGG subfamily.

It is found in the endoplasmic reticulum membrane. It functions in the pathway glycolipid biosynthesis; glycosylphosphatidylinositol-anchor biosynthesis. In terms of biological role, ethanolamine phosphate transferase involved in glycosylphosphatidylinositol-anchor biosynthesis. Transfers ethanolamine phosphate to the GPI second mannose. This chain is GPI ethanolamine phosphate transferase 2 (las21), found in Aspergillus oryzae (strain ATCC 42149 / RIB 40) (Yellow koji mold).